Reading from the N-terminus, the 303-residue chain is Small ribosomal subunit protein bS1m (303 aa).

Ser-2 bears the N-acetylserine mark. A mitochondrion; not cleaved-targeting transit peptide spans 2 to 13; sequence SFAQILRGSRAM.

The protein belongs to the bacterial ribosomal protein bS1 family. Component of the mitochondrial small ribosomal subunit (mt-SSU). Mature yeast 74S mitochondrial ribosomes consist of a small (37S) and a large (54S) subunit. The 37S small subunit contains a 15S ribosomal RNA (15S mt-rRNA) and at least 32 different proteins. The 54S large subunit contains a 21S rRNA (21S mt-rRNA) and at least 45 different proteins. This subunit is mutually exclusive with mug178/small ribosomal subunit protein L51-b.

The protein localises to the mitochondrion. In terms of biological role, component of the mitochondrial ribosome (mitoribosome), a dedicated translation machinery responsible for the synthesis of mitochondrial genome-encoded proteins, including at least some of the essential transmembrane subunits of the mitochondrial respiratory chain. The mitoribosomes are attached to the mitochondrial inner membrane and translation products are cotranslationally integrated into the membrane. bS1m functionally interacts with the 5'-UTR of mitochondrial mRNAs. Plays an essential role in mitochondrial translation. The chain is Small ribosomal subunit protein bS1m (mrp51) from Schizosaccharomyces pombe (strain 972 / ATCC 24843) (Fission yeast).